A 339-amino-acid polypeptide reads, in one-letter code: DNA repair protein RAD51 homolog 1 (339 aa).

Residues Met-1–Glu-23 form a disordered region. One can recognise a HhH domain in the interval Thr-48–Glu-77. Gly-127–Thr-134 serves as a coordination point for ATP.

It belongs to the RecA family. RAD51 subfamily. Forms linear homooligomers, giving rise to a RAD51 nucleoprotein filament, which is essential for strand-pairing reactions during DNA recombination. As to expression, expressed at high levels in lymphoid and reproductive organs.

Its subcellular location is the nucleus. It localises to the cytoplasm. It is found in the chromosome. Functionally, plays an important role in homologous strand exchange, a key step in DNA repair through homologous recombination (HR). Binds to single-stranded DNA in an ATP-dependent manner to form nucleoprotein filaments which are essential for the homology search and strand exchange. Catalyzes the recognition of homology and strand exchange between homologous DNA partners to form a joint molecule between a processed DNA break and the repair template. Recruited to resolve stalled replication forks during replication stress. Also involved in interstrand cross-link repair. The sequence is that of DNA repair protein RAD51 homolog 1 (RAD51A) from Gallus gallus (Chicken).